The sequence spans 189 residues: Molybdopterin synthase catalytic subunit (189 aa).

Over residues 1–30 (MSSLEISNSCFSPETRSPSSRQSVEDNASE) the composition is skewed to polar residues. Residues 1 to 41 (MSSLEISNSCFSPETRSPSSRQSVEDNASEPSGKDVDDVQE) form a disordered region. At S20 the chain carries Phosphoserine. Positions 32-41 (SGKDVDDVQE) are enriched in basic and acidic residues. Substrate is bound by residues 143–144 (HR), K159, and 166–168 (KKE).

The protein belongs to the MoaE family. MOCS2B subfamily. As to quaternary structure, heterotetramer; composed of 2 small (MOCS2A) and 2 large (MOCS2B) subunits.

Its subcellular location is the cytoplasm. The protein localises to the cytosol. The enzyme catalyses 2 [molybdopterin-synthase sulfur-carrier protein]-C-terminal-Gly-aminoethanethioate + cyclic pyranopterin phosphate + H2O = molybdopterin + 2 [molybdopterin-synthase sulfur-carrier protein]-C-terminal Gly-Gly + 2 H(+). It participates in cofactor biosynthesis; molybdopterin biosynthesis. Catalytic subunit of the molybdopterin synthase complex, a complex that catalyzes the conversion of precursor Z into molybdopterin. Acts by mediating the incorporation of 2 sulfur atoms from thiocarboxylated MOCS2A into precursor Z to generate a dithiolene group. The sequence is that of Molybdopterin synthase catalytic subunit from Mus musculus (Mouse).